The sequence spans 536 residues: Atrial natriuretic peptide receptor 3 (536 aa).

The first 26 residues, 1–26 (MRSLLLFTFSACVLLARVLLAGGASS), serve as a signal peptide directing secretion. Positions 27–40 (GAGDTRPGSRRRAR) are excised as a propeptide. The Extracellular portion of the chain corresponds to 41–478 (EALAAQKIEV…KSSGGLEESA (438 aa)). N81 carries an N-linked (GlcNAc...) asparagine glycan. Residues S101, V130, and C131 each contribute to the chloride site. Intrachain disulfides connect C103/C131 and C208/C256. N288 and N389 each carry an N-linked (GlcNAc...) asparagine glycan. Residues 479–499 (VTGIVVGALLGAGLLMAFYFF) traverse the membrane as a helical segment. Residues 500-536 (RKKYRITIERRNQQEESNIGKHRELREDSIRSHFSVA) lie on the Cytoplasmic side of the membrane.

The protein belongs to the ANF receptor family. In terms of assembly, homodimer; disulfide-linked. Interacts with OSTN.

The protein localises to the cell membrane. In terms of biological role, receptor for the natriuretic peptide hormones, binding with similar affinities atrial natriuretic peptide NPPA/ANP, brain natriuretic peptide NPPB/BNP, and C-type natriuretic peptide NPPC/CNP. May function as a clearance receptor for NPPA, NPPB and NPPC, regulating their local concentrations and effects. Acts as a regulator of osteoblast differentiation and bone growth by binding to its ligand osteocrin, thereby preventing binding between NPR3/NPR-C and natriuretic peptides, leading to increase cGMP production. The sequence is that of Atrial natriuretic peptide receptor 3 (Npr3) from Mus musculus (Mouse).